We begin with the raw amino-acid sequence, 165 residues long: Phosphopantetheine adenylyltransferase (165 aa).

Serine 10 serves as a coordination point for substrate. Residues serine 10–phenylalanine 11 and histidine 18 each bind ATP. Lysine 42, serine 79, and arginine 93 together coordinate substrate. ATP is bound by residues glycine 94–arginine 96, glutamate 104, and valine 129–threonine 135.

Belongs to the bacterial CoaD family. As to quaternary structure, homohexamer. The cofactor is Mg(2+).

It localises to the cytoplasm. The enzyme catalyses (R)-4'-phosphopantetheine + ATP + H(+) = 3'-dephospho-CoA + diphosphate. Its pathway is cofactor biosynthesis; coenzyme A biosynthesis; CoA from (R)-pantothenate: step 4/5. Reversibly transfers an adenylyl group from ATP to 4'-phosphopantetheine, yielding dephospho-CoA (dPCoA) and pyrophosphate. The chain is Phosphopantetheine adenylyltransferase from Bradyrhizobium diazoefficiens (strain JCM 10833 / BCRC 13528 / IAM 13628 / NBRC 14792 / USDA 110).